Consider the following 120-residue polypeptide: Hydrogenase maturation factor HypA (120 aa).

Ni(2+) is bound at residue H2. Zn(2+) is bound by residues C73, H76, C89, and C92.

Belongs to the HypA/HybF family.

In terms of biological role, involved in the maturation of [NiFe] hydrogenases. Required for nickel insertion into the metal center of the hydrogenase. The polypeptide is Hydrogenase maturation factor HypA (Deinococcus radiodurans (strain ATCC 13939 / DSM 20539 / JCM 16871 / CCUG 27074 / LMG 4051 / NBRC 15346 / NCIMB 9279 / VKM B-1422 / R1)).